Here is a 318-residue protein sequence, read N- to C-terminus: 4-hydroxy-3-methylbut-2-enyl diphosphate reductase (318 aa).

A [4Fe-4S] cluster-binding site is contributed by Cys-21. His-50 and His-83 together coordinate (2E)-4-hydroxy-3-methylbut-2-enyl diphosphate. Dimethylallyl diphosphate-binding residues include His-50 and His-83. Residues His-50 and His-83 each coordinate isopentenyl diphosphate. A [4Fe-4S] cluster-binding site is contributed by Cys-105. His-133 serves as a coordination point for (2E)-4-hydroxy-3-methylbut-2-enyl diphosphate. Dimethylallyl diphosphate is bound at residue His-133. His-133 contributes to the isopentenyl diphosphate binding site. Catalysis depends on Glu-135, which acts as the Proton donor. A (2E)-4-hydroxy-3-methylbut-2-enyl diphosphate-binding site is contributed by Thr-176. A [4Fe-4S] cluster-binding site is contributed by Cys-206. The (2E)-4-hydroxy-3-methylbut-2-enyl diphosphate site is built by Ser-234, Ser-235, Asn-236, and Ser-278. 4 residues coordinate dimethylallyl diphosphate: Ser-234, Ser-235, Asn-236, and Ser-278. Ser-234, Ser-235, Asn-236, and Ser-278 together coordinate isopentenyl diphosphate.

The protein belongs to the IspH family. Requires [4Fe-4S] cluster as cofactor.

It catalyses the reaction isopentenyl diphosphate + 2 oxidized [2Fe-2S]-[ferredoxin] + H2O = (2E)-4-hydroxy-3-methylbut-2-enyl diphosphate + 2 reduced [2Fe-2S]-[ferredoxin] + 2 H(+). It carries out the reaction dimethylallyl diphosphate + 2 oxidized [2Fe-2S]-[ferredoxin] + H2O = (2E)-4-hydroxy-3-methylbut-2-enyl diphosphate + 2 reduced [2Fe-2S]-[ferredoxin] + 2 H(+). The protein operates within isoprenoid biosynthesis; dimethylallyl diphosphate biosynthesis; dimethylallyl diphosphate from (2E)-4-hydroxy-3-methylbutenyl diphosphate: step 1/1. Its pathway is isoprenoid biosynthesis; isopentenyl diphosphate biosynthesis via DXP pathway; isopentenyl diphosphate from 1-deoxy-D-xylulose 5-phosphate: step 6/6. Catalyzes the conversion of 1-hydroxy-2-methyl-2-(E)-butenyl 4-diphosphate (HMBPP) into a mixture of isopentenyl diphosphate (IPP) and dimethylallyl diphosphate (DMAPP). Acts in the terminal step of the DOXP/MEP pathway for isoprenoid precursor biosynthesis. This is 4-hydroxy-3-methylbut-2-enyl diphosphate reductase from Shewanella oneidensis (strain ATCC 700550 / JCM 31522 / CIP 106686 / LMG 19005 / NCIMB 14063 / MR-1).